We begin with the raw amino-acid sequence, 349 residues long: DNA-directed RNA polymerase subunit alpha (349 aa).

An alpha N-terminal domain (alpha-NTD) region spans residues 1–226 (MLIAQRPTLI…GLFGLAQELN (226 aa)). The segment at 241-349 (AALAADLALP…GAEFIETEQY (109 aa)) is alpha C-terminal domain (alpha-CTD). The tract at residues 309-349 (KDSPPGFDPRQAVDTYGTDAYSPSFSDPSDDGAEFIETEQY) is disordered. Residues 336–349 (PSDDGAEFIETEQY) are compositionally biased toward acidic residues.

It belongs to the RNA polymerase alpha chain family. In terms of assembly, homodimer. The RNAP catalytic core consists of 2 alpha, 1 beta, 1 beta' and 1 omega subunit. When a sigma factor is associated with the core the holoenzyme is formed, which can initiate transcription.

The catalysed reaction is RNA(n) + a ribonucleoside 5'-triphosphate = RNA(n+1) + diphosphate. Functionally, DNA-dependent RNA polymerase catalyzes the transcription of DNA into RNA using the four ribonucleoside triphosphates as substrates. In Frankia casuarinae (strain DSM 45818 / CECT 9043 / HFP020203 / CcI3), this protein is DNA-directed RNA polymerase subunit alpha.